We begin with the raw amino-acid sequence, 157 residues long: Protein Smg homolog (157 aa).

The protein belongs to the Smg family.

The protein is Protein Smg homolog of Xanthomonas oryzae pv. oryzae (strain MAFF 311018).